Here is a 420-residue protein sequence, read N- to C-terminus: MHLTELKNTPVSDLVKLGEEQMGLENLARLRKQDIVFAILKQHAKSGEDIFGGGVLEILPDGFGFLRSADSSYLAGPDDIYVSPSQIRRFNLQTGDKIEGKIRPPKEGERYFALLKVDQVNDDKPEVSRSKILFENLTPLHANSRLRMERGNGSTEDLTARILDLASPIGKGQRGLIVAPPKAGKTMLLQNIAQSITHNYPDVELIVLLIDERPEEVTEMQRSVKGEVIASTFDEPATRHVQVAEMVIEKAKRSVEHKKDVVILLDSITRLARAYNTVTPASGKILSGGVDANALHRPKRFFGAARNVEEGGSLTIIATALVDTGSKMDEVIFEEFKGTGNMELHLSRKIAERRVFPAIDFKRSGTRKEDLLTTADELQKMWILRKILNPMDEVDAMEFLIDKLMMAKTNEEFFEVMKRS.

The 76-residue stretch at 49–124 folds into the Rho RNA-BD domain; that stretch reads DIFGGGVLEI…LKVDQVNDDK (76 aa). Residues 170 to 175, 182 to 187, and Arg-213 each bind ATP; these read GKGQRG and KAGKTM.

Belongs to the Rho family. Homohexamer. The homohexamer assembles into an open ring structure.

Functionally, facilitates transcription termination by a mechanism that involves Rho binding to the nascent RNA, activation of Rho's RNA-dependent ATPase activity, and release of the mRNA from the DNA template. This Haemophilus influenzae (strain ATCC 51907 / DSM 11121 / KW20 / Rd) protein is Transcription termination factor Rho.